We begin with the raw amino-acid sequence, 562 residues long: Probable tRNA (uracil-O(2)-)-methyltransferase (562 aa).

A disordered region spans residues 520-546 (VSRRQQTNPKKQEATNRPKQPCWMSLN). The C3H1-type zinc-finger motif lies at 535–562 (NRPKQPCWMSLNHPDGCPLGPESCRYLH).

This sequence belongs to the TRM44 family.

The protein localises to the cytoplasm. It carries out the reaction uridine(44) in tRNA(Ser) + S-adenosyl-L-methionine = 2'-O-methyluridine(44) in tRNA(Ser) + S-adenosyl-L-homocysteine + H(+). Its function is as follows. Probable adenosyl-L-methionine (AdoMet)-dependent tRNA (uracil-O(2)-)-methyltransferase. The protein is Probable tRNA (uracil-O(2)-)-methyltransferase of Caenorhabditis briggsae.